Consider the following 262-residue polypeptide: Acyl-[acyl-carrier-protein]--UDP-N-acetylglucosamine O-acyltransferase (262 aa).

It belongs to the transferase hexapeptide repeat family. LpxA subfamily. In terms of assembly, homotrimer.

It is found in the cytoplasm. The catalysed reaction is a (3R)-hydroxyacyl-[ACP] + UDP-N-acetyl-alpha-D-glucosamine = a UDP-3-O-[(3R)-3-hydroxyacyl]-N-acetyl-alpha-D-glucosamine + holo-[ACP]. Its pathway is glycolipid biosynthesis; lipid IV(A) biosynthesis; lipid IV(A) from (3R)-3-hydroxytetradecanoyl-[acyl-carrier-protein] and UDP-N-acetyl-alpha-D-glucosamine: step 1/6. Functionally, involved in the biosynthesis of lipid A, a phosphorylated glycolipid that anchors the lipopolysaccharide to the outer membrane of the cell. The polypeptide is Acyl-[acyl-carrier-protein]--UDP-N-acetylglucosamine O-acyltransferase (Vibrio parahaemolyticus serotype O3:K6 (strain RIMD 2210633)).